Reading from the N-terminus, the 524-residue chain is Cysteine--tRNA ligase (524 aa).

Zn(2+) is bound at residue C29. Positions 31-41 (PTVQAAPHVGH) match the 'HIGH' region motif. 3 residues coordinate Zn(2+): C207, H232, and E236. Over residues 246-258 (ARPASNAASADSP) the composition is skewed to low complexity. Residues 246–273 (ARPASNAASADSPGPGGGEPGGGEPSSG) are disordered. Residues 259–270 (GPGGGEPGGGEP) show a composition bias toward gly residues. Residues 291-295 (KMSKS) carry the 'KMSKS' region motif. Position 294 (K294) interacts with ATP.

It belongs to the class-I aminoacyl-tRNA synthetase family. Monomer. Zn(2+) serves as cofactor.

Its subcellular location is the cytoplasm. The enzyme catalyses tRNA(Cys) + L-cysteine + ATP = L-cysteinyl-tRNA(Cys) + AMP + diphosphate. The protein is Cysteine--tRNA ligase of Frankia casuarinae (strain DSM 45818 / CECT 9043 / HFP020203 / CcI3).